A 306-amino-acid polypeptide reads, in one-letter code: NAD kinase 1 (306 aa).

Aspartate 67 functions as the Proton acceptor in the catalytic mechanism. NAD(+) contacts are provided by residues 67-68 (DG), 149-150 (NE), aspartate 181, and 192-197 (TGYTVS).

Belongs to the NAD kinase family. It depends on a divalent metal cation as a cofactor.

The protein localises to the cytoplasm. It catalyses the reaction NAD(+) + ATP = ADP + NADP(+) + H(+). In terms of biological role, involved in the regulation of the intracellular balance of NAD and NADP, and is a key enzyme in the biosynthesis of NADP. Catalyzes specifically the phosphorylation on 2'-hydroxyl of the adenosine moiety of NAD to yield NADP. The sequence is that of NAD kinase 1 from Trichormus variabilis (strain ATCC 29413 / PCC 7937) (Anabaena variabilis).